The following is a 247-amino-acid chain: MHKLVLIRHGESTWNLENRFTGWTDVDLTPTGIEQAKNAGRLLKAEGYEFDLAYTSVLKRATRTLWHCLDEMDRTWLPVEHSWRLNERHYGALQGLNKADMAKQYGDAQVLVWRRSYDTPPPALETTDPRSERGDLRYAGLQAGEVPLTECLKDTVARVLPYWNESIAPAIRSGKRVLIAAHGNSIRALVKYLDNISDQDIVGLNIPNGIPLVYELDADLKPLRHYYLGDAEAAAKAAAAVASQGKA.

Residues 8 to 15 (RHGESTWN), 21 to 22 (TG), arginine 60, 87 to 90 (ERHY), lysine 98, 114 to 115 (RR), and 183 to 184 (GN) contribute to the substrate site. Catalysis depends on histidine 9, which acts as the Tele-phosphohistidine intermediate. Glutamate 87 (proton donor/acceptor) is an active-site residue.

Belongs to the phosphoglycerate mutase family. BPG-dependent PGAM subfamily. In terms of assembly, homodimer.

It catalyses the reaction (2R)-2-phosphoglycerate = (2R)-3-phosphoglycerate. The protein operates within carbohydrate degradation; glycolysis; pyruvate from D-glyceraldehyde 3-phosphate: step 3/5. Functionally, catalyzes the interconversion of 2-phosphoglycerate and 3-phosphoglycerate. This chain is 2,3-bisphosphoglycerate-dependent phosphoglycerate mutase, found in Acidovorax ebreus (strain TPSY) (Diaphorobacter sp. (strain TPSY)).